A 442-amino-acid chain; its full sequence is tRNA(Ile)-lysidine synthase (442 aa).

30–35 (SGGLDS) is a binding site for ATP.

This sequence belongs to the tRNA(Ile)-lysidine synthase family.

It localises to the cytoplasm. The enzyme catalyses cytidine(34) in tRNA(Ile2) + L-lysine + ATP = lysidine(34) in tRNA(Ile2) + AMP + diphosphate + H(+). Its function is as follows. Ligates lysine onto the cytidine present at position 34 of the AUA codon-specific tRNA(Ile) that contains the anticodon CAU, in an ATP-dependent manner. Cytidine is converted to lysidine, thus changing the amino acid specificity of the tRNA from methionine to isoleucine. The protein is tRNA(Ile)-lysidine synthase of Pseudomonas fluorescens (strain Pf0-1).